The chain runs to 430 residues: MGKHEFLTPKAIANRIKAKGLQKLRWYCQMCQKQCRDENGFKCHCMSESHQRQMQVFGQAPDRVVEGFSEEFLDAFLTLLRRAHRHSRIAATVVYNEFIADRHHVHMNSTRWATLTEFVKFLGREGHCKVEDTPKGWFITYIDRDSEQAVKARLKRKRIKSDLAEDERQERMIARQIERAQQSMGKTNGELGDDASPDGSEGESGSEDEYSDSENDHEGQEEDAKEANKAAGKIAIALQRAVPGPKVNPLDDKPKVKFGFEEEDEVSARDKEKEELAKKKGKDAINAAEARRSALDELMKEEEKAKERSNRKDYWLCPGIVVKVMSKSLAEKGYCKQKGVVKRVIDKYVGEIEMLESKHVLRVDQDELETVIPQIGGLVRIVNGAYRGSNARLLSVDTERFCAKVQVEKGLYDGKVLKAIEYEDICKIFH.

The C2H2-type zinc-finger motif lies at 28 to 50 (CQMCQKQCRDENGFKCHCMSESH). The segment at 51–160 (QRQMQVFGQA…KARLKRKRIK (110 aa)) is winged helix-turn-helix (wHTH). Residues 147-183 (EQAVKARLKRKRIKSDLAEDERQERMIARQIERAQQS) are a coiled coil. Residues 155–158 (KRKR) carry the Nuclear localization signal (NLS) motif. Disordered regions lie at residues 179–230 (RAQQ…ANKA) and 261–284 (EEED…GKDA). The segment covering 191-224 (LGDDASPDGSEGESGSEDEYSDSENDHEGQEEDA) has biased composition (acidic residues). A compositionally biased stretch (basic and acidic residues) spans 261–278 (EEEDEVSARDKEKEELAK). The stretch at 283–312 (DAINAAEARRSALDELMKEEEKAKERSNRK) forms a coiled coil. The interval 319–370 (GIVVKVMSKSLAEKGYCKQKGVVKRVIDKYVGEIEMLESKHVLRVDQDELET) is C-terminal subdomain A. The tract at residues 376–427 (GGLVRIVNGAYRGSNARLLSVDTERFCAKVQVEKGLYDGKVLKAIEYEDICK) is C-terminal subdomain B.

Belongs to the KIN17 family.

Its subcellular location is the nucleus. In Oryza sativa subsp. japonica (Rice), this protein is KIN17-like protein.